The following is a 198-amino-acid chain: Mediator of RNA polymerase II transcription subunit 20 (198 aa).

The protein belongs to the Mediator complex subunit 20 family. Component of the Mediator complex.

Its subcellular location is the nucleus. Functionally, component of the Mediator complex, a coactivator involved in the regulated transcription of nearly all RNA polymerase II-dependent genes. Mediator functions as a bridge to convey information from gene-specific regulatory proteins to the basal RNA polymerase II transcription machinery. Mediator is recruited to promoters by direct interactions with regulatory proteins and serves as a scaffold for the assembly of a functional preinitiation complex with RNA polymerase II and the general transcription factors. The polypeptide is Mediator of RNA polymerase II transcription subunit 20 (mdt-20) (Caenorhabditis briggsae).